Reading from the N-terminus, the 660-residue chain is DNA ligase (660 aa).

Residues 33-37 (DFVYD), 82-83 (SL), and Glu110 contribute to the NAD(+) site. The active-site N6-AMP-lysine intermediate is Lys112. NAD(+) is bound by residues Arg133, Glu167, Lys281, and Lys305. Positions 396, 399, 412, and 417 each coordinate Zn(2+). Residues 583 to 660 (DENRLLAGKK…SFEDIKSYLN (78 aa)) enclose the BRCT domain.

Belongs to the NAD-dependent DNA ligase family. LigA subfamily. Mg(2+) is required as a cofactor. Mn(2+) serves as cofactor.

The enzyme catalyses NAD(+) + (deoxyribonucleotide)n-3'-hydroxyl + 5'-phospho-(deoxyribonucleotide)m = (deoxyribonucleotide)n+m + AMP + beta-nicotinamide D-nucleotide.. In terms of biological role, DNA ligase that catalyzes the formation of phosphodiester linkages between 5'-phosphoryl and 3'-hydroxyl groups in double-stranded DNA using NAD as a coenzyme and as the energy source for the reaction. It is essential for DNA replication and repair of damaged DNA. The sequence is that of DNA ligase from Borrelia garinii subsp. bavariensis (strain ATCC BAA-2496 / DSM 23469 / PBi) (Borreliella bavariensis).